The following is a 372-amino-acid chain: 4-hydroxy-3-methylbut-2-en-1-yl diphosphate synthase (flavodoxin) (372 aa).

Residues C270, C273, C305, and E312 each coordinate [4Fe-4S] cluster.

The protein belongs to the IspG family. [4Fe-4S] cluster serves as cofactor.

It catalyses the reaction (2E)-4-hydroxy-3-methylbut-2-enyl diphosphate + oxidized [flavodoxin] + H2O + 2 H(+) = 2-C-methyl-D-erythritol 2,4-cyclic diphosphate + reduced [flavodoxin]. The protein operates within isoprenoid biosynthesis; isopentenyl diphosphate biosynthesis via DXP pathway; isopentenyl diphosphate from 1-deoxy-D-xylulose 5-phosphate: step 5/6. Functionally, converts 2C-methyl-D-erythritol 2,4-cyclodiphosphate (ME-2,4cPP) into 1-hydroxy-2-methyl-2-(E)-butenyl 4-diphosphate. The polypeptide is 4-hydroxy-3-methylbut-2-en-1-yl diphosphate synthase (flavodoxin) (Aliivibrio salmonicida (strain LFI1238) (Vibrio salmonicida (strain LFI1238))).